The chain runs to 70 residues: NADH-ubiquinone oxidoreductase chain 3 (70 aa).

A helical transmembrane segment spans residues 42–62; that stretch reads FFVITLIFLIFDVEIYLLLPM.

It belongs to the complex I subunit 3 family.

The protein resides in the mitochondrion membrane. It catalyses the reaction a ubiquinone + NADH + 5 H(+)(in) = a ubiquinol + NAD(+) + 4 H(+)(out). Functionally, core subunit of the mitochondrial membrane respiratory chain NADH dehydrogenase (Complex I) that is believed to belong to the minimal assembly required for catalysis. Complex I functions in the transfer of electrons from NADH to the respiratory chain. The immediate electron acceptor for the enzyme is believed to be ubiquinone. The protein is NADH-ubiquinone oxidoreductase chain 3 (ND3) of Artemia salina (Brine shrimp).